Reading from the N-terminus, the 83-residue chain is Mu-theraphotoxin-Hhn2c (83 aa).

The first 21 residues, 1–21, serve as a signal peptide directing secretion; the sequence is MKASMFLALAGLVLLFVVGYA. The propeptide occupies 22–48; the sequence is SESEEKEFPIELLSKIFAVDVFKGEER. 3 disulfide bridges follow: Cys-50–Cys-65, Cys-57–Cys-70, and Cys-64–Cys-77. The residue at position 81 (Leu-81) is a Leucine amide.

The protein belongs to the neurotoxin 10 (Hwtx-1) family. 15 (Hntx-3) subfamily. As to quaternary structure, monomer. In terms of tissue distribution, expressed by the venom gland.

The protein localises to the secreted. Functionally, lethal neurotoxin. Selectively blocks tetrodotoxin-sensitive voltage-gated sodium channels (Nav). Does not affect tetrodotoxin-resistant voltage-gated sodium channels or calcium channels. The protein is Mu-theraphotoxin-Hhn2c of Cyriopagopus hainanus (Chinese bird spider).